The following is a 352-amino-acid chain: MSTSETNNIKAPNHVTEYDSVTNNIVVAALYKFTRFADFEEYREPILNIMLDNEVKGTLLIASEGINGTISGTRQGIDNVLEYLRSIDAIGSFTFKESYTDAQPFYRTKVKLKKEIVTMGVENIDPLQSVGRYVKPSDWNALISDPDVILIDTRNDYEVKIGTFQNAVNPNTETFREFPEYVAKELDPAKHKKVAMFCTGGIRCEKSTAFMREQGFEEVYHLEGGILKYLEEVPASDSMWEGDCFVFDNRVSVNHNLEKGSYEQCFACRMPITQAEMQSPAYIKGESCPHCIDKATDEQKARFREREHQMQLAQKRGEAHIGSDVIDVIEKRKAAKIEARRQADEANKAKAD.

Residues 144–238 (SDPDVILIDT…YLEEVPASDS (95 aa)) enclose the Rhodanese domain. The Cysteine persulfide intermediate role is filled by C198.

This sequence belongs to the TrhO family.

The catalysed reaction is uridine(34) in tRNA + AH2 + O2 = 5-hydroxyuridine(34) in tRNA + A + H2O. Functionally, catalyzes oxygen-dependent 5-hydroxyuridine (ho5U) modification at position 34 in tRNAs. The sequence is that of tRNA uridine(34) hydroxylase from Psychrobacter arcticus (strain DSM 17307 / VKM B-2377 / 273-4).